Here is a 553-residue protein sequence, read N- to C-terminus: Hydroxylamine reductase (553 aa).

Cys-3, Cys-6, Cys-18, and Cys-25 together coordinate [2Fe-2S] cluster. 8 residues coordinate hybrid [4Fe-2O-2S] cluster: His-252, Glu-276, Cys-320, Cys-408, Cys-436, Cys-461, Glu-495, and Lys-497. Cys-408 carries the cysteine persulfide modification.

It belongs to the HCP family. The cofactor is [2Fe-2S] cluster. Hybrid [4Fe-2O-2S] cluster serves as cofactor.

The protein localises to the cytoplasm. The catalysed reaction is A + NH4(+) + H2O = hydroxylamine + AH2 + H(+). In terms of biological role, catalyzes the reduction of hydroxylamine to form NH(3) and H(2)O. The chain is Hydroxylamine reductase from Vibrio vulnificus (strain YJ016).